Reading from the N-terminus, the 326-residue chain is Tetraacyldisaccharide 4'-kinase (326 aa).

Residue 58–65 participates in ATP binding; that stretch reads SVGGNGKT.

This sequence belongs to the LpxK family.

The catalysed reaction is a lipid A disaccharide + ATP = a lipid IVA + ADP + H(+). It participates in glycolipid biosynthesis; lipid IV(A) biosynthesis; lipid IV(A) from (3R)-3-hydroxytetradecanoyl-[acyl-carrier-protein] and UDP-N-acetyl-alpha-D-glucosamine: step 6/6. Functionally, transfers the gamma-phosphate of ATP to the 4'-position of a tetraacyldisaccharide 1-phosphate intermediate (termed DS-1-P) to form tetraacyldisaccharide 1,4'-bis-phosphate (lipid IVA). The protein is Tetraacyldisaccharide 4'-kinase of Pseudoalteromonas translucida (strain TAC 125).